A 348-amino-acid polypeptide reads, in one-letter code: Protein RecA (348 aa).

ATP is bound at residue 66 to 73 (GPESSGKT).

The protein belongs to the RecA family.

The protein localises to the cytoplasm. In terms of biological role, can catalyze the hydrolysis of ATP in the presence of single-stranded DNA, the ATP-dependent uptake of single-stranded DNA by duplex DNA, and the ATP-dependent hybridization of homologous single-stranded DNAs. It interacts with LexA causing its activation and leading to its autocatalytic cleavage. This is Protein RecA from Neisseria meningitidis serogroup A / serotype 4A (strain DSM 15465 / Z2491).